Consider the following 78-residue polypeptide: MSAHCMLTGARPGFGNRISHSHRRTSRRFDPNIQTKRYWLPSENRHVRLRLSTKGIRTVDSIGVEAAVARIRARGVRI.

Belongs to the bacterial ribosomal protein bL28 family.

This chain is Large ribosomal subunit protein bL28B (rpmB2), found in Streptomyces coelicolor (strain ATCC BAA-471 / A3(2) / M145).